Reading from the N-terminus, the 637-residue chain is Threonine--tRNA ligase (637 aa).

Residues 1 to 61 (MITITLPDSS…ATDAAVRLIT (61 aa)) enclose the TGS domain. The segment at 238 to 528 (DHRKLGAELD…LIEHFAGKFP (291 aa)) is catalytic. Residues Cys329, His380, and His505 each contribute to the Zn(2+) site.

This sequence belongs to the class-II aminoacyl-tRNA synthetase family. As to quaternary structure, homodimer. Requires Zn(2+) as cofactor.

Its subcellular location is the cytoplasm. It carries out the reaction tRNA(Thr) + L-threonine + ATP = L-threonyl-tRNA(Thr) + AMP + diphosphate + H(+). Its function is as follows. Catalyzes the attachment of threonine to tRNA(Thr) in a two-step reaction: L-threonine is first activated by ATP to form Thr-AMP and then transferred to the acceptor end of tRNA(Thr). Also edits incorrectly charged L-seryl-tRNA(Thr). The sequence is that of Threonine--tRNA ligase from Desulfosudis oleivorans (strain DSM 6200 / JCM 39069 / Hxd3) (Desulfococcus oleovorans).